Reading from the N-terminus, the 189-residue chain is Gluconokinase (189 aa).

Position 16 to 23 (16 to 23 (GVSGAGKS)) interacts with ATP.

Belongs to the gluconokinase GntK/GntV family. Monomer.

It catalyses the reaction D-gluconate + ATP = 6-phospho-D-gluconate + ADP + H(+). It participates in carbohydrate acid metabolism; D-gluconate degradation. Functionally, phosphorylates gluconate to 6-phosphogluconate. In Arabidopsis thaliana (Mouse-ear cress), this protein is Gluconokinase.